We begin with the raw amino-acid sequence, 394 residues long: Elongation factor Tu (394 aa).

The 195-residue stretch at 10–204 folds into the tr-type G domain; sequence KPHVNVGTIG…HLDSYIPEPE (195 aa). The segment at 19–26 is G1; it reads GHVDHGKT. 19–26 lines the GTP pocket; the sequence is GHVDHGKT. T26 provides a ligand contact to Mg(2+). A G2 region spans residues 60–64; sequence GITIN. The tract at residues 81-84 is G3; it reads DCPG. GTP-binding positions include 81-85 and 136-139; these read DCPGH and NKCD. Residues 136–139 are G4; the sequence is NKCD. Residues 174 to 176 form a G5 region; sequence SAL.

This sequence belongs to the TRAFAC class translation factor GTPase superfamily. Classic translation factor GTPase family. EF-Tu/EF-1A subfamily. In terms of assembly, monomer.

The protein localises to the cytoplasm. It catalyses the reaction GTP + H2O = GDP + phosphate + H(+). GTP hydrolase that promotes the GTP-dependent binding of aminoacyl-tRNA to the A-site of ribosomes during protein biosynthesis. The chain is Elongation factor Tu from Cronobacter sakazakii (strain ATCC BAA-894) (Enterobacter sakazakii).